The primary structure comprises 341 residues: KH domain-containing RNA-binding protein QKI (341 aa).

The interval 11 to 82 is qua1 domain; involved in homodimerization; sequence PKPTPDYLMQ…PDAVGPIVQL (72 aa). The KH domain occupies 87–153; the sequence is YVPVKEYPDF…WEHLNEDLHV (67 aa). The interval 182 to 213 is qua2 domain; involved in RNA binding; sequence AAEGEDSLKKMQLMELAILNGTYRDANIKSPA. S188 is subject to Phosphoserine. An Omega-N-methylarginine modification is found at R227. Position 242 is an asymmetric dimethylarginine; by CARM1; alternate (R242). R242 bears the Omega-N-methylarginine; alternate mark. R256 carries the post-translational modification Omega-N-methylarginine. The SH3-binding motif lies at 276–279; that stretch reads PPGP. Positions 324–330 match the Nuclear localization signal motif; it reads RVHPYQR.

It belongs to the quaking family. As to quaternary structure, homodimer; does not require RNA to homodimerize. Able to heterodimerize with BICC1. Post-translationally, methylated by PRMT1. In terms of processing, tyrosine phosphorylated at its C-terminus, probably by FYN. Phosphorylation leads to decreased mRNA-binding affinity, affecting transport and/or stabilization of MBP mRNA. Ubiquitinated by RNF6 in macrophages, leading to its degradation.

It localises to the nucleus. Its subcellular location is the cytoplasm. In terms of biological role, RNA reader protein, which recognizes and binds specific RNAs, thereby regulating RNA metabolic processes, such as pre-mRNA splicing, circular RNA (circRNA) formation, mRNA export, mRNA stability and/or translation. Involved in various cellular processes, such as mRNA storage into stress granules, apoptosis, lipid deposition, interferon response, glial cell fate and development. Binds to the 5'-NACUAAY-N(1,20)-UAAY-3' RNA core sequence. Acts as a mRNA modification reader that specifically recognizes and binds mRNA transcripts modified by internal N(7)-methylguanine (m7G). Promotes the formation of circular RNAs (circRNAs) during the epithelial to mesenchymal transition and in cardiomyocytes: acts by binding to sites flanking circRNA-forming exons. CircRNAs are produced by back-splicing circularization of pre-mRNAs. Plays a central role in myelinization via 3 distinct mechanisms. First, acts by protecting and promoting stability of target mRNAs such as MBP, SIRT2 and CDKN1B, which promotes oligodendrocyte differentiation. Second, participates in mRNA transport by regulating the nuclear export of MBP mRNA. Finally, indirectly regulates mRNA splicing of MAG pre-mRNA during oligodendrocyte differentiation by acting as a negative regulator of MAG exon 12 alternative splicing: acts by binding to HNRNPA1 mRNA splicing factor, preventing its translation. Involved in microglia differentiation and remyelination by regulating microexon alternative splicing of the Rho GTPase pathway. Involved in macrophage differentiation: promotes monocyte differentiation by regulating pre-mRNA splicing in naive peripheral blood monocytes. Acts as an important regulator of muscle development: required for the contractile function of cardiomyocytes by regulating alternative splicing of cardiomyocyte transcripts. Acts as a negative regulator of thermogenesis by decreasing stability, nuclear export and translation of mRNAs encoding PPARGC1A and UCP1. Also required for visceral endoderm function and blood vessel development. May also play a role in smooth muscle development. In addition to its RNA-binding activity, also acts as a nuclear transcription coactivator for SREBF2/SREBP2. The chain is KH domain-containing RNA-binding protein QKI from Bos taurus (Bovine).